The sequence spans 356 residues: Histidinol-phosphate aminotransferase (356 aa).

The residue at position 211 (K211) is an N6-(pyridoxal phosphate)lysine.

The protein belongs to the class-II pyridoxal-phosphate-dependent aminotransferase family. Histidinol-phosphate aminotransferase subfamily. Homodimer. Requires pyridoxal 5'-phosphate as cofactor.

The catalysed reaction is L-histidinol phosphate + 2-oxoglutarate = 3-(imidazol-4-yl)-2-oxopropyl phosphate + L-glutamate. The protein operates within amino-acid biosynthesis; L-histidine biosynthesis; L-histidine from 5-phospho-alpha-D-ribose 1-diphosphate: step 7/9. This Aeromonas hydrophila subsp. hydrophila (strain ATCC 7966 / DSM 30187 / BCRC 13018 / CCUG 14551 / JCM 1027 / KCTC 2358 / NCIMB 9240 / NCTC 8049) protein is Histidinol-phosphate aminotransferase.